A 388-amino-acid chain; its full sequence is ATP phosphoribosyltransferase regulatory subunit (388 aa).

Belongs to the class-II aminoacyl-tRNA synthetase family. HisZ subfamily. As to quaternary structure, heteromultimer composed of HisG and HisZ subunits.

Its subcellular location is the cytoplasm. The protein operates within amino-acid biosynthesis; L-histidine biosynthesis; L-histidine from 5-phospho-alpha-D-ribose 1-diphosphate: step 1/9. Required for the first step of histidine biosynthesis. May allow the feedback regulation of ATP phosphoribosyltransferase activity by histidine. This chain is ATP phosphoribosyltransferase regulatory subunit, found in Acinetobacter baumannii (strain SDF).